The following is a 274-amino-acid chain: Large ribosomal subunit protein uL2 (274 aa).

Residues 223–264 form a disordered region; sequence VAMNPVDHPHGGGEGRTSGGRHPVSPWGVPTKGYKTRSNKRT.

Belongs to the universal ribosomal protein uL2 family. As to quaternary structure, part of the 50S ribosomal subunit. Forms a bridge to the 30S subunit in the 70S ribosome.

Functionally, one of the primary rRNA binding proteins. Required for association of the 30S and 50S subunits to form the 70S ribosome, for tRNA binding and peptide bond formation. It has been suggested to have peptidyltransferase activity; this is somewhat controversial. Makes several contacts with the 16S rRNA in the 70S ribosome. The protein is Large ribosomal subunit protein uL2 of Shewanella denitrificans (strain OS217 / ATCC BAA-1090 / DSM 15013).